Consider the following 454-residue polypeptide: Notoamide biosynthesis cluster protein M' (454 aa).

Residues asparagine 51 and asparagine 74 are each glycosylated (N-linked (GlcNAc...) asparagine). A compositionally biased stretch (basic residues) spans 205 to 219 (KARSKEKKPKRKKSK). A disordered region spans residues 205–224 (KARSKEKKPKRKKSKAEKEH). 2 helical membrane passes run 334–354 (MTTV…SGLF) and 375–395 (FWMY…VWGV).

Its subcellular location is the membrane. In terms of biological role, part of the gene cluster that mediates the biosynthesis of notoamide, a fungal indole alkaloid that belongs to a family of natural products containing a characteristic bicyclo[2.2.2]diazaoctane core. The first step of notoamide biosynthesis involves coupling of L-proline and L-tryptophan by the bimodular NRPS notE', to produce cyclo-L-tryptophan-L-proline called brevianamide F. The reverse prenyltransferase notF' then acts as a deoxybrevianamide E synthase and converts brevianamide F to deoxybrevianamide E via reverse prenylation at C-2 of the indole ring leading to the bicyclo[2.2.2]diazaoctane core. Deoxybrevianamide E is further hydroxylated at C-6 of the indole ring, likely catalyzed by the cytochrome P450 monooxygenase notG', to yield 6-hydroxy-deoxybrevianamide E. 6-hydroxy-deoxybrevianamide E is a specific substrate of the prenyltransferase notC' for normal prenylation at C-7 to produce 6-hydroxy-7-prenyl-deoxybrevianamide, also called notoamide S. As the proposed pivotal branching point in notoamide biosynthesis, notoamide S can be diverted to notoamide E through an oxidative pyran ring closure putatively catalyzed by either notH' cytochrome P450 monooxygenase or the notD' FAD-linked oxidoreductase. This step would be followed by an indole 2,3-epoxidation-initiated pinacol-like rearrangement catalyzed by the notB' FAD-dependent monooxygenase leading to the formation of notoamide C and notoamide D. On the other hand notoamide S is converted to notoamide T by notH' (or notD'), a bifunctional oxidase that also functions as the intramolecular Diels-Alderase responsible for generation of (-)-notoamide T. To generate antipodal (+)-notoaminide T, notH (or notD) in Aspergillus strain MF297-2 is expected to catalyze a Diels-Alder reaction leading to the opposite stereochemistry. The remaining oxidoreductase notD' (or notH') likely catalyzes the oxidative pyran ring formation to yield (-)-stephacidin A. The FAD-dependent monooxygenase notI' is highly similar to notB' and is predicted to catalyze a similar conversion from (-)-stephacidin A to (+)-notoamide B via the 2,3-epoxidation of (-)-stephacidin A followed by a pinacol-type rearrangement. Finally, it remains unclear which enzyme could be responsible for the final hydroxylation steps leading to notoamide A and sclerotiamide. The function of notM' in the notoamide biosynthesis has not been determined yet. This chain is Notoamide biosynthesis cluster protein M', found in Aspergillus versicolor.